The primary structure comprises 1934 residues: Pyruvate dehydrogenase [NADP(+)] (1934 aa).

4Fe-4S ferredoxin-type domains are found at residues 710–739 and 767–796; these read SIPIVDMNKCTQCNYCSIVCPHAAIRPFLL and YRIQVTPLDCTGCELCVHACPDDALHMEGL. Residues C719, C722, C725, C729, C776, C779, C782, and C786 each contribute to the [4Fe-4S] cluster site. The Flavodoxin-like domain maps to 1288 to 1438; the sequence is MHVLYGTETG…ELIEWLPDYL (151 aa). Residues 1501 to 1759 form the FAD-binding FR-type domain; that stretch reads PNSVLLPVIE…NIKASAFNLP (259 aa). Residues 1542-1553 and 1685-1695 contribute to the FAD site; these read YCLGDSLALYGQ and IKSRSYSIASC.

It in the N-terminal section; belongs to the pyruvate:ferredoxin/flavodoxin oxidoreductase family. As to quaternary structure, homodimer. FAD is required as a cofactor. Requires FMN as cofactor. The cofactor is thiamine diphosphate.

It catalyses the reaction pyruvate + NADP(+) + CoA = acetyl-CoA + CO2 + NADPH. Its function is as follows. May have an important role in respiratory metabolism. Cryptosporidium have a relic mitochondrion with no function in energy metabolism so it is not known if PFOR has a function. This chain is Pyruvate dehydrogenase [NADP(+)] (PFOR), found in Cryptosporidium parvum.